We begin with the raw amino-acid sequence, 79 residues long: uncharacterized protein (79 aa).

This is an uncharacterized protein from Escherichia coli O6:H1 (strain CFT073 / ATCC 700928 / UPEC).